Consider the following 269-residue polypeptide: Tryptophan synthase alpha chain (269 aa).

Residues Glu-49 and Asp-60 each act as proton acceptor in the active site.

It belongs to the TrpA family. In terms of assembly, tetramer of two alpha and two beta chains.

It catalyses the reaction (1S,2R)-1-C-(indol-3-yl)glycerol 3-phosphate + L-serine = D-glyceraldehyde 3-phosphate + L-tryptophan + H2O. Its pathway is amino-acid biosynthesis; L-tryptophan biosynthesis; L-tryptophan from chorismate: step 5/5. In terms of biological role, the alpha subunit is responsible for the aldol cleavage of indoleglycerol phosphate to indole and glyceraldehyde 3-phosphate. This chain is Tryptophan synthase alpha chain, found in Salmonella arizonae (strain ATCC BAA-731 / CDC346-86 / RSK2980).